We begin with the raw amino-acid sequence, 873 residues long: Alanine--tRNA ligase (873 aa).

His-562, His-566, Cys-664, and His-668 together coordinate Zn(2+).

This sequence belongs to the class-II aminoacyl-tRNA synthetase family. The cofactor is Zn(2+).

The protein resides in the cytoplasm. The catalysed reaction is tRNA(Ala) + L-alanine + ATP = L-alanyl-tRNA(Ala) + AMP + diphosphate. In terms of biological role, catalyzes the attachment of alanine to tRNA(Ala) in a two-step reaction: alanine is first activated by ATP to form Ala-AMP and then transferred to the acceptor end of tRNA(Ala). Also edits incorrectly charged Ser-tRNA(Ala) and Gly-tRNA(Ala) via its editing domain. In Shewanella amazonensis (strain ATCC BAA-1098 / SB2B), this protein is Alanine--tRNA ligase.